The following is a 598-amino-acid chain: Mitogen-activated protein kinase 19 (598 aa).

In terms of domain architecture, Protein kinase spans 25 to 316; sequence YRILEVIGKG…AAEALADPYF (292 aa). Residues 31–39 and K54 each bind ATP; that span reads IGKGSYGVV. D151 (proton acceptor) is an active-site residue. T187 bears the Phosphothreonine mark. A TXY motif is present at residues 187–189; sequence TDY. Residue Y189 is modified to Phosphotyrosine. T192 is modified (phosphothreonine). The segment at 396–486 is disordered; it reads GKSGPVIPPD…VTYENDRNLK (91 aa). Over residues 414–425 the composition is skewed to low complexity; that stretch reads SAVHSSAVNSNA.

Belongs to the protein kinase superfamily. CMGC Ser/Thr protein kinase family. MAP kinase subfamily. In terms of processing, dually phosphorylated on Thr-187 and Tyr-189, which activates the enzyme.

It catalyses the reaction L-seryl-[protein] + ATP = O-phospho-L-seryl-[protein] + ADP + H(+). The catalysed reaction is L-threonyl-[protein] + ATP = O-phospho-L-threonyl-[protein] + ADP + H(+). With respect to regulation, activated by threonine and tyrosine phosphorylation. This chain is Mitogen-activated protein kinase 19 (MPK19), found in Arabidopsis thaliana (Mouse-ear cress).